The chain runs to 102 residues: Small ribosomal subunit protein uS10 (102 aa).

Belongs to the universal ribosomal protein uS10 family. Part of the 30S ribosomal subunit.

Involved in the binding of tRNA to the ribosomes. This Clostridium botulinum (strain ATCC 19397 / Type A) protein is Small ribosomal subunit protein uS10.